Here is a 107-residue protein sequence, read N- to C-terminus: U1-lycotoxin-Ls1b (107 aa).

A signal peptide spans Met-1 to Ser-20. The propeptide occupies Glu-21 to Arg-41. Disulfide bonds link Cys-44-Cys-59, Cys-51-Cys-68, Cys-58-Cys-86, and Cys-70-Cys-84.

The protein belongs to the neurotoxin 19 (CSTX) family. 04 (U1-Lctx) subfamily. As to expression, expressed by the venom gland.

It localises to the secreted. The sequence is that of U1-lycotoxin-Ls1b from Lycosa singoriensis (Wolf spider).